The sequence spans 299 residues: Sulfate adenylyltransferase subunit 2 (299 aa).

It belongs to the PAPS reductase family. CysD subfamily. As to quaternary structure, sulfate-activating enzymes, NodP and NodQ, may be physically associated.

It carries out the reaction sulfate + ATP + H(+) = adenosine 5'-phosphosulfate + diphosphate. In terms of biological role, proposed to provide activated sulfate for transfer to nod factor. In Rhizobium sp. (strain BR816), this protein is Sulfate adenylyltransferase subunit 2 (nodP).